A 107-amino-acid polypeptide reads, in one-letter code: U1-lycotoxin-Ls1h (107 aa).

Positions 1–20 (MMKVLVVVALLVTLISYSSS) are cleaved as a signal peptide. Positions 21–41 (EGIDDLEADELLSLMANEQTR) are excised as a propeptide. 3 cysteine pairs are disulfide-bonded: cysteine 44–cysteine 59, cysteine 51–cysteine 68, and cysteine 70–cysteine 84.

This sequence belongs to the neurotoxin 19 (CSTX) family. 04 (U1-Lctx) subfamily. Expressed by the venom gland.

Its subcellular location is the secreted. The chain is U1-lycotoxin-Ls1h from Lycosa singoriensis (Wolf spider).